We begin with the raw amino-acid sequence, 303 residues long: Taste receptor type 2 member 13 (303 aa).

The Extracellular portion of the chain corresponds to Met1–Ser7. A helical membrane pass occupies residues Ile8–Val28. Topologically, residues Leu29–Arg55 are cytoplasmic. The chain crosses the membrane as a helical span at residues Ile56–Phe76. Over Val77 to Met85 the chain is Extracellular. Residues Ile86–Phe106 traverse the membrane as a helical segment. The Cytoplasmic segment spans residues Tyr107 to Gln128. The helical transmembrane segment at Val129–Asn149 threads the bilayer. Over Ile150–Thr184 the chain is Extracellular. N-linked (GlcNAc...) asparagine glycosylation is present at Asn166. A helical membrane pass occupies residues Met185–Leu205. Over Arg206–Lys232 the chain is Cytoplasmic. A helical membrane pass occupies residues Ile233 to Ile253. Residues Ser254 to Leu261 are Extracellular-facing. A helical membrane pass occupies residues Ile262–Ile282. Residues Leu283–Arg303 lie on the Cytoplasmic side of the membrane.

It belongs to the G-protein coupled receptor T2R family.

It is found in the membrane. Functionally, receptor that may play a role in the perception of bitterness and is gustducin-linked. May play a role in sensing the chemical composition of the gastrointestinal content. The activity of this receptor may stimulate alpha gustducin, mediate PLC-beta-2 activation and lead to the gating of TRPM5. This is Taste receptor type 2 member 13 (TAS2R13) from Papio hamadryas (Hamadryas baboon).